An 813-amino-acid polypeptide reads, in one-letter code: ATP-dependent zinc metalloprotease FTSH 10, mitochondrial (813 aa).

A mitochondrion-targeting transit peptide spans 1-86 (MIFSKLGSSL…FANPRLRRFF (86 aa)). The disordered stretch occupies residues 93-129 (KKNYENYYPKDSKKAPKNEQKSESRDGSKKNENENAG). Residues 94-125 (KNYENYYPKDSKKAPKNEQKSESRDGSKKNEN) show a composition bias toward basic and acidic residues. A helical membrane pass occupies residues 139-157 (MLIPLMAIALILSTFSLGS). An ATP-binding site is contributed by 367–374 (GPPGTGKT). His592 is a Zn(2+) binding site. The active site involves Glu593. Residues His596 and Asp668 each coordinate Zn(2+). A compositionally biased stretch (basic and acidic residues) spans 764-790 (RPFKSGETTNYDRFKSGFEESEKESQK). The interval 764–813 (RPFKSGETTNYDRFKSGFEESEKESQKESVPVKPVEDDGIPPLEPQVVPT) is disordered.

This sequence in the N-terminal section; belongs to the AAA ATPase family. The protein in the C-terminal section; belongs to the peptidase M41 family. Requires Zn(2+) as cofactor.

Its subcellular location is the mitochondrion inner membrane. Its function is as follows. Probable ATP-dependent zinc metallopeptidase. Involved in the assembly and/or stability of the complexes I and V of the mitochondrial oxidative phosphorylation system. The polypeptide is ATP-dependent zinc metalloprotease FTSH 10, mitochondrial (FTSH10) (Arabidopsis thaliana (Mouse-ear cress)).